The primary structure comprises 53 residues: ATP synthase protein 8 (53 aa).

The chain crosses the membrane as a helical span at residues Ile10 to Leu30.

It belongs to the ATPase protein 8 family. F-type ATPases have 2 components, CF(1) - the catalytic core - and CF(0) - the membrane proton channel.

Its subcellular location is the mitochondrion membrane. Mitochondrial membrane ATP synthase (F(1)F(0) ATP synthase or Complex V) produces ATP from ADP in the presence of a proton gradient across the membrane which is generated by electron transport complexes of the respiratory chain. F-type ATPases consist of two structural domains, F(1) - containing the extramembraneous catalytic core and F(0) - containing the membrane proton channel, linked together by a central stalk and a peripheral stalk. During catalysis, ATP synthesis in the catalytic domain of F(1) is coupled via a rotary mechanism of the central stalk subunits to proton translocation. Part of the complex F(0) domain. Minor subunit located with subunit a in the membrane. This Artemia franciscana (Brine shrimp) protein is ATP synthase protein 8 (MT-ATP8).